The primary structure comprises 566 residues: Malate synthase, glyoxysomal (566 aa).

Residue Arg-182 is the Proton acceptor of the active site. Asp-467 acts as the Proton donor in catalysis. The Microbody targeting signal signature appears at 564-566; sequence SRL.

It belongs to the malate synthase family.

The protein resides in the glyoxysome. It catalyses the reaction glyoxylate + acetyl-CoA + H2O = (S)-malate + CoA + H(+). It functions in the pathway carbohydrate metabolism; glyoxylate cycle; (S)-malate from isocitrate: step 2/2. The sequence is that of Malate synthase, glyoxysomal from Cucurbita maxima (Pumpkin).